The chain runs to 235 residues: uncharacterized protein (235 aa).

Disordered stretches follow at residues 1-47 (MSHK…QSTN) and 78-128 (QEHH…KQPQ). Polar residues predominate over residues 20 to 33 (HPPGQSLSSISWSP). Residues 84–98 (QQQQQQRQNIRSQNS) are compositionally biased toward low complexity. Polar residues predominate over residues 106–128 (VQESQWTSSASNSSLKKQEKQPQ).

This is an uncharacterized protein from Saccharomyces cerevisiae (strain ATCC 204508 / S288c) (Baker's yeast).